A 144-amino-acid chain; its full sequence is MARTKQSARKTTGGKAPRKQLSAKSARKGVSPASSAGAKKSRYRPGSVALKEIRRYQKSTDFLIRRLPFQRACRSVVKECSNATDIRFQGPALASIQEALEVYLVGLFEDAMLCAYHAKRVTVFPKDISLVLKLRSRHVKSISD.

Positions 1 to 45 (MARTKQSARKTTGGKAPRKQLSAKSARKGVSPASSAGAKKSRYRP) are disordered. Residue lysine 5 is modified to N6,N6,N6-trimethyllysine; alternate. Lysine 5 bears the N6,N6-dimethyllysine; alternate mark. Residues lysine 5 and lysine 10 each carry the N6-methyllysine; alternate modification. Lysine 10, lysine 15, lysine 19, lysine 24, lysine 28, and lysine 39 each carry N6-acetyllysine; alternate. Residue lysine 15 is modified to N6,N6-dimethyllysine; alternate. An N6-methyllysine; alternate mark is found at lysine 19, lysine 24, lysine 28, and lysine 39. 2 positions are modified to N6,N6,N6-trimethyllysine; alternate: lysine 28 and lysine 39. An N6,N6-dimethyllysine; alternate mark is found at lysine 28 and lysine 39. At lysine 58 the chain carries N6-acetyllysine.

Belongs to the histone H3 family. The nucleosome is a histone octamer containing two molecules each of H2A, H2B, H3 and H4 assembled in one H3-H4 heterotetramer and two H2A-H2B heterodimers. The octamer wraps approximately 147 bp of DNA. In terms of processing, mono-, di- and trimethylated to form H3K4me1/2/3. H3K4me activates gene expression by regulating transcription elongation and plays a role in telomere length maintenance. H3K4me enrichment correlates with transcription levels, and occurs in a 5' to 3' gradient with H3K4me3 enrichment at the 5'-end of genes, shifting to H3K4me2 and then H3K4me1. H3K36me represses gene expression. Acetylation of histone H3 leads to transcriptional activation.

The protein localises to the nucleus. Its subcellular location is the chromosome. Its function is as follows. Core component of nucleosome. Nucleosomes wrap and compact DNA into chromatin, limiting DNA accessibility to the cellular machineries which require DNA as a template. Histones thereby play a central role in transcription regulation, DNA repair, DNA replication and chromosomal stability. DNA accessibility is regulated via a complex set of post-translational modifications of histones, also called histone code, and nucleosome remodeling. The polypeptide is Histone H3.1 (HHT1) (Encephalitozoon cuniculi (strain GB-M1) (Microsporidian parasite)).